A 101-amino-acid polypeptide reads, in one-letter code: Protein Tat (101 aa).

Residues 1-24 (MEPVDPNREPWNHPGSQPKTACTN) are interaction with human CREBBP. The interval 1–48 (MEPVDPNREPWNHPGSQPKTACTNCYCKKCCYHCQVCFLQKGLGISYG) is transactivation. Positions 22, 25, and 27 each coordinate Zn(2+). Residues 22 to 37 (CTNCYCKKCCYHCQVC) are cysteine-rich. The residue at position 28 (lysine 28) is an N6-acetyllysine; by host PCAF. Zn(2+) is bound by residues cysteine 30, histidine 33, cysteine 34, and cysteine 37. A core region spans residues 38–48 (FLQKGLGISYG). A disordered region spans residues 48-101 (GRKKRRQRRSAPPGSKTHQDLIPKQPLSQTQRKPTGPEESKKEVESKAEPDRFD). The short motif at 49–57 (RKKRRQRRS) is the Nuclear localization signal, RNA-binding (TAR), and protein transduction element. The segment at 49–86 (RKKRRQRRSAPPGSKTHQDLIPKQPLSQTQRKPTGPEE) is interaction with the host capping enzyme RNGTT. Lysine 50 and lysine 51 each carry N6-acetyllysine; by host EP300 and GCN5L2. 2 positions are modified to asymmetric dimethylarginine; by host PRMT6: arginine 52 and arginine 53. Lysine 71 is covalently cross-linked (Glycyl lysine isopeptide (Lys-Gly) (interchain with G-Cter in ubiquitin)). Residues 82–101 (TGPEESKKEVESKAEPDRFD) are compositionally biased toward basic and acidic residues.

The protein belongs to the lentiviruses Tat family. In terms of assembly, interacts with host CCNT1. Associates with the P-TEFb complex composed at least of Tat, P-TEFb (CDK9 and CCNT1), TAR RNA, RNA Pol II. Recruits the HATs CREBBP, TAF1/TFIID, EP300, PCAF and GCN5L2. Interacts with host KAT5/Tip60; this interaction targets the latter to degradation. Interacts with the host deacetylase SIRT1. Interacts with host capping enzyme RNGTT; this interaction stimulates RNGTT. Binds to host KDR, and to the host integrins ITGAV/ITGB3 and ITGA5/ITGB1. Interacts with host KPNB1/importin beta-1 without previous binding to KPNA1/importin alpha-1. Interacts with EIF2AK2. Interacts with host nucleosome assembly protein NAP1L1; this interaction may be required for the transport of Tat within the nucleus, since the two proteins interact at the nuclear rim. Interacts with host C1QBP/SF2P32; this interaction involves lysine-acetylated Tat. Interacts with the host chemokine receptors CCR2, CCR3 and CXCR4. Interacts with host DPP4/CD26; this interaction may trigger an anti-proliferative effect. Interacts with host LDLR. Interacts with the host extracellular matrix metalloproteinase MMP1. Interacts with host PRMT6; this interaction mediates Tat's methylation. Interacts with, and is ubiquitinated by MDM2/Hdm2. Interacts with host PSMC3 and HTATIP2. Interacts with STAB1; this interaction may overcome SATB1-mediated repression of IL2 and IL2RA (interleukin) in T cells by binding to the same domain than HDAC1. Interacts (when acetylated) with human CDK13, thereby increasing HIV-1 mRNA splicing and promoting the production of the doubly spliced HIV-1 protein Nef. Interacts with host TBP; this interaction modulates the activity of transcriptional pre-initiation complex. Interacts with host RELA. Interacts with host PLSCR1; this interaction negatively regulates Tat transactivation activity by altering its subcellular distribution. In terms of processing, asymmetrical arginine methylation by host PRMT6 seems to diminish the transactivation capacity of Tat and affects the interaction with host CCNT1. Acetylation by EP300, CREBBP, GCN5L2/GCN5 and PCAF regulates the transactivation activity of Tat. EP300-mediated acetylation of Lys-50 promotes dissociation of Tat from the TAR RNA through the competitive binding to PCAF's bromodomain. In addition, the non-acetylated Tat's N-terminus can also interact with PCAF. PCAF-mediated acetylation of Lys-28 enhances Tat's binding to CCNT1. Lys-50 is deacetylated by SIRT1. Post-translationally, polyubiquitination by host MDM2 does not target Tat to degradation, but activates its transactivation function and fosters interaction with CCNT1 and TAR RNA. In terms of processing, phosphorylated by EIF2AK2 on serine and threonine residues adjacent to the basic region important for TAR RNA binding and function. Phosphorylation of Tat by EIF2AK2 is dependent on the prior activation of EIF2AK2 by dsRNA.

It is found in the host nucleus. Its subcellular location is the host nucleolus. The protein resides in the host cytoplasm. It localises to the secreted. Functionally, transcriptional activator that increases RNA Pol II processivity, thereby increasing the level of full-length viral transcripts. Recognizes a hairpin structure at the 5'-LTR of the nascent viral mRNAs referred to as the transactivation responsive RNA element (TAR) and recruits the cyclin T1-CDK9 complex (P-TEFb complex) that will in turn hyperphosphorylate the RNA polymerase II to allow efficient elongation. The CDK9 component of P-TEFb and other Tat-activated kinases hyperphosphorylate the C-terminus of RNA Pol II that becomes stabilized and much more processive. Other factors such as HTATSF1/Tat-SF1, SUPT5H/SPT5, and HTATIP2 are also important for Tat's function. Besides its effect on RNA Pol II processivity, Tat induces chromatin remodeling of proviral genes by recruiting the histone acetyltransferases (HATs) CREBBP, EP300 and PCAF to the chromatin. This also contributes to the increase in proviral transcription rate, especially when the provirus integrates in transcriptionally silent region of the host genome. To ensure maximal activation of the LTR, Tat mediates nuclear translocation of NF-kappa-B by interacting with host RELA. Through its interaction with host TBP, Tat may also modulate transcription initiation. Tat can reactivate a latently infected cell by penetrating in it and transactivating its LTR promoter. In the cytoplasm, Tat is thought to act as a translational activator of HIV-1 mRNAs. Its function is as follows. Extracellular circulating Tat can be endocytosed by surrounding uninfected cells via the binding to several surface receptors such as CD26, CXCR4, heparan sulfate proteoglycans (HSPG) or LDLR. Neurons are rarely infected, but they internalize Tat via their LDLR. Through its interaction with nuclear HATs, Tat is potentially able to control the acetylation-dependent cellular gene expression. Modulates the expression of many cellular genes involved in cell survival, proliferation or in coding for cytokines or cytokine receptors. Tat plays a role in T-cell and neurons apoptosis. Tat induced neurotoxicity and apoptosis probably contribute to neuroAIDS. Circulating Tat also acts as a chemokine-like and/or growth factor-like molecule that binds to specific receptors on the surface of the cells, affecting many cellular pathways. In the vascular system, Tat binds to ITGAV/ITGB3 and ITGA5/ITGB1 integrins dimers at the surface of endothelial cells and competes with bFGF for heparin-binding sites, leading to an excess of soluble bFGF. The sequence is that of Protein Tat from Homo sapiens (Human).